A 392-amino-acid chain; its full sequence is 8-amino-7-oxononanoate synthase (392 aa).

Arg-19 serves as a coordination point for substrate. 106 to 107 (GY) is a binding site for pyridoxal 5'-phosphate. Position 131 (His-131) interacts with substrate. Pyridoxal 5'-phosphate contacts are provided by Ser-176, His-204, and Thr-233. Lys-236 bears the N6-(pyridoxal phosphate)lysine mark. Thr-350 contributes to the substrate binding site.

Belongs to the class-II pyridoxal-phosphate-dependent aminotransferase family. BioF subfamily. Homodimer. Pyridoxal 5'-phosphate is required as a cofactor.

It carries out the reaction 6-carboxyhexanoyl-[ACP] + L-alanine + H(+) = (8S)-8-amino-7-oxononanoate + holo-[ACP] + CO2. It participates in cofactor biosynthesis; biotin biosynthesis. Catalyzes the decarboxylative condensation of pimeloyl-[acyl-carrier protein] and L-alanine to produce 8-amino-7-oxononanoate (AON), [acyl-carrier protein], and carbon dioxide. The sequence is that of 8-amino-7-oxononanoate synthase from Stutzerimonas stutzeri (strain A1501) (Pseudomonas stutzeri).